The chain runs to 623 residues: Glutathione import ATP-binding protein GsiA (623 aa).

ABC transporter domains are found at residues 15-269 and 314-564; these read VENL…RALL and LRVR…RKLL. ATP is bound by residues 49–56 and 357–364; these read GESGSGKS.

This sequence belongs to the ABC transporter superfamily. Glutathione importer (TC 3.A.1.5.11) family. As to quaternary structure, the complex is composed of two ATP-binding proteins (GsiA), two transmembrane proteins (GsiC and GsiD) and a solute-binding protein (GsiB).

It is found in the cell inner membrane. The catalysed reaction is glutathione(out) + ATP + H2O = glutathione(in) + ADP + phosphate + H(+). Inhibited by verapamil but not by carbonyl cyanide m-chlorophenylhydrazone (CCCP). Part of the ABC transporter complex GsiABCD involved in glutathione import. Responsible for energy coupling to the transport system. This chain is Glutathione import ATP-binding protein GsiA, found in Escherichia coli (strain K12).